The sequence spans 75 residues: Small integral membrane protein 7 (75 aa).

The first 17 residues, 1-17, serve as a signal peptide directing secretion; the sequence is MIGDILLFGTLLMNAGA. The Extracellular portion of the chain corresponds to 18-53; it reads VLNFKLKKKDTQGFGEESKEPSTGDNIREFLLSLRY. A helical membrane pass occupies residues 54-74; sequence FRIFIALWNVFMMLCMIVLFG. Ser-75 is a topological domain (cytoplasmic).

Belongs to the SMIM7 family.

It localises to the membrane. The sequence is that of Small integral membrane protein 7 (Smim7) from Mus musculus (Mouse).